The primary structure comprises 203 residues: Short chain dehydrogenase/reductase dpmpH (203 aa).

NADP(+) contacts are provided by Asp-23, Tyr-77, and Lys-81. Tyr-77 acts as the Proton acceptor in catalysis. Lys-81 functions as the Lowers pKa of active site Tyr in the catalytic mechanism.

This sequence belongs to the short-chain dehydrogenases/reductases (SDR) family.

It functions in the pathway secondary metabolite biosynthesis; terpenoid biosynthesis. Short chain dehydrogenase/reductase; part of the gene cluster that mediates the biosynthesis of diterpenoid pyrones. The first step of the pathway is the synthesis of the alpha-pyrone moiety by the polyketide synthase dpmpA via condensation of one acetyl-CoA starter unit with 3 malonyl-CoA units and 2 methylations. The alpha-pyrone is then combined with geranylgeranyl pyrophosphate (GGPP) formed by the GGPP synthase dpmpD through the action of the prenyltransferase dpmpC to yield a linear alpha-pyrone diterpenoid. Subsequent steps in the diterpenoid pyrone biosynthetic pathway involve the decalin core formation, which is initiated by the epoxidation of the C10-C11 olefin by the FAD-dependent oxidoreductase dpmpE, and is followed by a cyclization cascade catalyzed by the terpene cyclase dpmpB. The short chain dehydrogenase/reductase dpmpG then oxidizes the 8S hydroxy group to a ketone and the short chain dehydrogenase/reductase dpmpH reduces the ketone to the 8R hydroxy group to yield higginsianin B. Higginsianin B is further methylated by the methyltransferase dpmpI to produce the intermediate named FDDP B. The cytochrome P450 monooxygenase dpmpJ then oxidizes the C-26 methyl to primary alcohol, producing the final diterpenoid pyrone with a C-26 primary alcohol on the gamma-pyrone moiety named FDDP C. The sequence is that of Short chain dehydrogenase/reductase dpmpH from Macrophomina phaseolina (strain MS6) (Charcoal rot fungus).